We begin with the raw amino-acid sequence, 436 residues long: APO protein 1, chloroplastic (436 aa).

Residues 1–47 (MLLVSPACRGVYLQTIDPKPIDFSARASYALCFQIPTSIPKRECLMR) constitute a chloroplast transit peptide. 2 APO domains span residues 155-240 (ACSE…EIPE) and 329-414 (ACGY…RVPQ).

It belongs to the APO family. In terms of tissue distribution, expressed at low level. Expressed at higher level in leaves. Expressed at lower level in roots, stems, siliques and flowers.

It localises to the plastid. Its subcellular location is the chloroplast. Its function is as follows. Involved in the stable assembly of several 4Fe-4S cluster-containing complexes of chloroplasts. May participate in 4Fe-4S cofactor incorporation into psaA and/or psaB during translation. This chain is APO protein 1, chloroplastic (APO1), found in Arabidopsis thaliana (Mouse-ear cress).